The primary structure comprises 317 residues: Acetyl-coenzyme A carboxylase carboxyl transferase subunit alpha (317 aa).

The CoA carboxyltransferase C-terminal domain maps to 38–292; the sequence is TLEERLARLE…DNIIKQSLVE (255 aa).

The protein belongs to the AccA family. Acetyl-CoA carboxylase is a heterohexamer composed of biotin carboxyl carrier protein (AccB), biotin carboxylase (AccC) and two subunits each of ACCase subunit alpha (AccA) and ACCase subunit beta (AccD).

Its subcellular location is the cytoplasm. It catalyses the reaction N(6)-carboxybiotinyl-L-lysyl-[protein] + acetyl-CoA = N(6)-biotinyl-L-lysyl-[protein] + malonyl-CoA. It functions in the pathway lipid metabolism; malonyl-CoA biosynthesis; malonyl-CoA from acetyl-CoA: step 1/1. In terms of biological role, component of the acetyl coenzyme A carboxylase (ACC) complex. First, biotin carboxylase catalyzes the carboxylation of biotin on its carrier protein (BCCP) and then the CO(2) group is transferred by the carboxyltransferase to acetyl-CoA to form malonyl-CoA. The protein is Acetyl-coenzyme A carboxylase carboxyl transferase subunit alpha of Oceanobacillus iheyensis (strain DSM 14371 / CIP 107618 / JCM 11309 / KCTC 3954 / HTE831).